Here is a 356-residue protein sequence, read N- to C-terminus: Phospho-2-dehydro-3-deoxyheptonate aldolase, Tyr-sensitive (356 aa).

Belongs to the class-I DAHP synthase family. It depends on a divalent metal cation as a cofactor.

It carries out the reaction D-erythrose 4-phosphate + phosphoenolpyruvate + H2O = 7-phospho-2-dehydro-3-deoxy-D-arabino-heptonate + phosphate. It functions in the pathway metabolic intermediate biosynthesis; chorismate biosynthesis; chorismate from D-erythrose 4-phosphate and phosphoenolpyruvate: step 1/7. Specifically feedback inhibited by tyrosine with 50% inhibition observed at 9 microM tyrosine, pH 7.0. Functionally, stereospecific condensation of phosphoenolpyruvate (PEP) and D-erythrose-4-phosphate (E4P) giving rise to 3-deoxy-D-arabino-heptulosonate-7-phosphate (DAHP). This Escherichia coli (strain K12) protein is Phospho-2-dehydro-3-deoxyheptonate aldolase, Tyr-sensitive (aroF).